Consider the following 33-residue polypeptide: Potassium channel toxin alpha-KTx 24.1 (33 aa).

4 cysteine pairs are disulfide-bonded: cysteine 4–cysteine 23, cysteine 9–cysteine 28, cysteine 13–cysteine 30, and cysteine 18–cysteine 33.

Belongs to the short scorpion toxin superfamily. Potassium channel inhibitor family. Alpha-KTx 24 subfamily. Post-translationally, contains 4 disulfide bonds. Expressed by the venom gland.

It is found in the secreted. Reversibly blocks voltage-gated potassium channels Kv1.2/KCNA2, Kv1.3/KCNA3 and, weakly, Shaker B. In Pandinus imperator (Emperor scorpion), this protein is Potassium channel toxin alpha-KTx 24.1.